Here is a 120-residue protein sequence, read N- to C-terminus: NAD(P)H-quinone oxidoreductase subunit 3, chloroplastic (120 aa).

Helical transmembrane passes span 9–29, 62–82, and 88–108; these read IFWA…FLSG, YYMF…LYPW, and VLGV…IVGL.

Belongs to the complex I subunit 3 family. NDH is composed of at least 16 different subunits, 5 of which are encoded in the nucleus.

The protein resides in the plastid. It is found in the chloroplast thylakoid membrane. The catalysed reaction is a plastoquinone + NADH + (n+1) H(+)(in) = a plastoquinol + NAD(+) + n H(+)(out). It carries out the reaction a plastoquinone + NADPH + (n+1) H(+)(in) = a plastoquinol + NADP(+) + n H(+)(out). In terms of biological role, NDH shuttles electrons from NAD(P)H:plastoquinone, via FMN and iron-sulfur (Fe-S) centers, to quinones in the photosynthetic chain and possibly in a chloroplast respiratory chain. The immediate electron acceptor for the enzyme in this species is believed to be plastoquinone. Couples the redox reaction to proton translocation, and thus conserves the redox energy in a proton gradient. In Trachelium caeruleum (Blue throatwort), this protein is NAD(P)H-quinone oxidoreductase subunit 3, chloroplastic.